The primary structure comprises 475 residues: Ribulose bisphosphate carboxylase large chain (475 aa).

A propeptide spanning residues 1–2 (MS) is cleaved from the precursor. Position 3 is an N-acetylproline (proline 3). Lysine 14 is subject to N6,N6,N6-trimethyllysine. Substrate is bound by residues asparagine 123 and threonine 173. The Proton acceptor role is filled by lysine 175. Position 177 (lysine 177) interacts with substrate. Residues lysine 201, aspartate 203, and glutamate 204 each coordinate Mg(2+). Lysine 201 bears the N6-carboxylysine mark. Histidine 294 (proton acceptor) is an active-site residue. Arginine 295, histidine 327, and serine 379 together coordinate substrate.

This sequence belongs to the RuBisCO large chain family. Type I subfamily. As to quaternary structure, heterohexadecamer of 8 large chains and 8 small chains; disulfide-linked. The disulfide link is formed within the large subunit homodimers. Mg(2+) serves as cofactor. In terms of processing, the disulfide bond which can form in the large chain dimeric partners within the hexadecamer appears to be associated with oxidative stress and protein turnover.

It localises to the plastid. The protein localises to the chloroplast. It catalyses the reaction 2 (2R)-3-phosphoglycerate + 2 H(+) = D-ribulose 1,5-bisphosphate + CO2 + H2O. It carries out the reaction D-ribulose 1,5-bisphosphate + O2 = 2-phosphoglycolate + (2R)-3-phosphoglycerate + 2 H(+). In terms of biological role, ruBisCO catalyzes two reactions: the carboxylation of D-ribulose 1,5-bisphosphate, the primary event in carbon dioxide fixation, as well as the oxidative fragmentation of the pentose substrate in the photorespiration process. Both reactions occur simultaneously and in competition at the same active site. The polypeptide is Ribulose bisphosphate carboxylase large chain (Magnolia acuminata (Cucumber tree)).